The following is a 313-amino-acid chain: Ribosomal RNA small subunit methyltransferase H (313 aa).

S-adenosyl-L-methionine is bound by residues 35-37 (GGH), Asp-55, Phe-79, Asp-100, and Gln-107.

Belongs to the methyltransferase superfamily. RsmH family.

The protein localises to the cytoplasm. It carries out the reaction cytidine(1402) in 16S rRNA + S-adenosyl-L-methionine = N(4)-methylcytidine(1402) in 16S rRNA + S-adenosyl-L-homocysteine + H(+). Its function is as follows. Specifically methylates the N4 position of cytidine in position 1402 (C1402) of 16S rRNA. This Burkholderia pseudomallei (strain K96243) protein is Ribosomal RNA small subunit methyltransferase H.